A 154-amino-acid polypeptide reads, in one-letter code: Transcriptional repressor NrdR (154 aa).

Residues 3 to 34 (CPFCNAPDTKVIDSRLATEGAQVRRRRECMSC) fold into a zinc finger. Residues 49-139 (PRVIKSDGNR…VYRSFQDVNA (91 aa)) form the ATP-cone domain.

It belongs to the NrdR family. Zn(2+) is required as a cofactor.

Functionally, negatively regulates transcription of bacterial ribonucleotide reductase nrd genes and operons by binding to NrdR-boxes. The protein is Transcriptional repressor NrdR of Hydrogenovibrio crunogenus (strain DSM 25203 / XCL-2) (Thiomicrospira crunogena).